A 125-amino-acid polypeptide reads, in one-letter code: Large ribosomal subunit protein bL12 (125 aa).

The protein belongs to the bacterial ribosomal protein bL12 family. Homodimer. Part of the ribosomal stalk of the 50S ribosomal subunit. Forms a multimeric L10(L12)X complex, where L10 forms an elongated spine to which 2 to 4 L12 dimers bind in a sequential fashion. Binds GTP-bound translation factors.

Forms part of the ribosomal stalk which helps the ribosome interact with GTP-bound translation factors. Is thus essential for accurate translation. The polypeptide is Large ribosomal subunit protein bL12 (Methylibium petroleiphilum (strain ATCC BAA-1232 / LMG 22953 / PM1)).